The sequence spans 341 residues: MPSIRLADLAQQLDAELHGDGDIVITGVASMQSAQTGHITFMVNPKYREHLGLCQASAVVMTQDDLPFAKSAALVVKNPYLTYARMAQILDTTPQPAQNIAPSAVIDATAKLGNNVSIGANAVIESGVELGDNVIIGAGCFVGKNSKIGAGSRLWANVTIYHEIQIGQNCLIQSGTVVGADGFGYANDRGNWVKIPQIGRVIIGDRVEIGACTTIDRGALDDTIIGNGVIIDNQCQIAHNVVIGDNTAVAGGVIMAGSLKIGRYCMIGGASVINGHMEICDKVTVTGMGMVMRPITEPGVYSSGIPLQPNKVWRKTAALVMNIDDMSKRLKSLERKVNQQD.

Residue H239 is the Proton acceptor of the active site.

It belongs to the transferase hexapeptide repeat family. LpxD subfamily. In terms of assembly, homotrimer.

The catalysed reaction is a UDP-3-O-[(3R)-3-hydroxyacyl]-alpha-D-glucosamine + a (3R)-hydroxyacyl-[ACP] = a UDP-2-N,3-O-bis[(3R)-3-hydroxyacyl]-alpha-D-glucosamine + holo-[ACP] + H(+). The enzyme catalyses UDP-3-O-[(3R)-3-hydroxytetradecanoyl]-alpha-D-glucosamine + (3R)-hydroxytetradecanoyl-[ACP] = UDP-2-N,3-O-bis[(3R)-3-hydroxytetradecanoyl]-alpha-D-glucosamine + holo-[ACP] + H(+). Its pathway is glycolipid biosynthesis; lipid IV(A) biosynthesis; lipid IV(A) from (3R)-3-hydroxytetradecanoyl-[acyl-carrier-protein] and UDP-N-acetyl-alpha-D-glucosamine: step 3/6. In terms of biological role, catalyzes the N-acylation of UDP-3-O-(hydroxytetradecanoyl)glucosamine using 3-hydroxytetradecanoyl-ACP as the acyl donor. Is involved in the biosynthesis of lipid A, a phosphorylated glycolipid that anchors the lipopolysaccharide to the outer membrane of the cell. In Shigella dysenteriae serotype 1 (strain Sd197), this protein is UDP-3-O-(3-hydroxymyristoyl)glucosamine N-acyltransferase.